The primary structure comprises 428 residues: Lysophosphatidic acid phosphatase type 6 (428 aa).

A mitochondrion-targeting transit peptide spans 1-32 (MITGVFSMRLWTPVGVLTSLAYCLHQRRVALA). Residues 58–168 (RHGARSPRKP…VFIRSTNIFR (111 aa)) form a substrate binding region. His-59 (nucleophile) is an active-site residue. Catalysis depends on Asp-335, which acts as the Proton donor.

It belongs to the histidine acid phosphatase family. As to quaternary structure, monomer.

It is found in the mitochondrion. The enzyme catalyses a phosphate monoester + H2O = an alcohol + phosphate. It carries out the reaction 1-(9Z-octadecenoyl)-sn-glycero-3-phosphate + H2O = 1-(9Z-octadecenoyl)-sn-glycerol + phosphate. Its function is as follows. Hydrolyzes lysophosphatidic acid (LPA) containing a medium length fatty acid chain to the corresponding monoacylglycerol. Has highest activity with lysophosphatidic acid containing myristate (C14:0), monounsaturated oleate (C18:1) or palmitate (C16:0), and lower activity with C18:0 and C6:0 lysophosphatidic acid. This chain is Lysophosphatidic acid phosphatase type 6 (ACP6), found in Pongo abelii (Sumatran orangutan).